We begin with the raw amino-acid sequence, 256 residues long: 4-hydroxy-tetrahydrodipicolinate reductase (256 aa).

8–13 (GATGRV) contacts NAD(+). NADP(+) is bound at residue Lys36. NAD(+) is bound by residues 89–91 (GTT) and 113–116 (ATNM). His145 (proton donor/acceptor) is an active-site residue. A (S)-2,3,4,5-tetrahydrodipicolinate-binding site is contributed by His146. Lys149 acts as the Proton donor in catalysis. 155–156 (GT) is a binding site for (S)-2,3,4,5-tetrahydrodipicolinate.

It belongs to the DapB family.

The protein localises to the cytoplasm. The enzyme catalyses (S)-2,3,4,5-tetrahydrodipicolinate + NAD(+) + H2O = (2S,4S)-4-hydroxy-2,3,4,5-tetrahydrodipicolinate + NADH + H(+). It catalyses the reaction (S)-2,3,4,5-tetrahydrodipicolinate + NADP(+) + H2O = (2S,4S)-4-hydroxy-2,3,4,5-tetrahydrodipicolinate + NADPH + H(+). Its pathway is amino-acid biosynthesis; L-lysine biosynthesis via DAP pathway; (S)-tetrahydrodipicolinate from L-aspartate: step 4/4. Functionally, catalyzes the conversion of 4-hydroxy-tetrahydrodipicolinate (HTPA) to tetrahydrodipicolinate. The protein is 4-hydroxy-tetrahydrodipicolinate reductase of Wolinella succinogenes (strain ATCC 29543 / DSM 1740 / CCUG 13145 / JCM 31913 / LMG 7466 / NCTC 11488 / FDC 602W) (Vibrio succinogenes).